Reading from the N-terminus, the 242-residue chain is ATP synthase subunit a (242 aa).

Transmembrane regions (helical) follow at residues 29-49 (SSIY…LAFY), 84-104 (FIPL…LGMT), 114-134 (IIVT…VGFV), 140-160 (FLTL…MIVI), 181-201 (MAGH…MIYL), and 203-223 (FLPI…AILQ).

Belongs to the ATPase A chain family. F-type ATPases have 2 components, CF(1) - the catalytic core - and CF(0) - the membrane proton channel. CF(1) has five subunits: alpha(3), beta(3), gamma(1), delta(1), epsilon(1). CF(0) has three main subunits: a(1), b(2) and c(9-12). The alpha and beta chains form an alternating ring which encloses part of the gamma chain. CF(1) is attached to CF(0) by a central stalk formed by the gamma and epsilon chains, while a peripheral stalk is formed by the delta and b chains.

Its subcellular location is the cell inner membrane. Key component of the proton channel; it plays a direct role in the translocation of protons across the membrane. This Rickettsia conorii (strain ATCC VR-613 / Malish 7) protein is ATP synthase subunit a.